The sequence spans 256 residues: Post-translational flagellin modification protein A (256 aa).

A substrate-binding site is contributed by Ser-145. Tyr-168 acts as the Proton acceptor in catalysis.

Belongs to the short-chain dehydrogenases/reductases (SDR) family.

In terms of biological role, required for biosynthesis of LAH modification in the post-translational modification of Campylobacter coli flagellin. This chain is Post-translational flagellin modification protein A (ptmA), found in Campylobacter coli.